A 577-amino-acid chain; its full sequence is Leucine-rich repeat protein soc-2 homolog (577 aa).

Basic and acidic residues-rich tracts occupy residues 1–10 (MRRTKGRTDS) and 33–48 (STAHKSDKKHDPEAKK). Residues 1-71 (MRRTKGRTDS…PTVKKRSTPS (71 aa)) are disordered. 20 LRR repeats span residues 87 to 109 (GATRLDLSKAAVTVLPKELKELT), 110 to 131 (SLRELYLYGNRIAVLPPEVGLL), 133 to 155 (NLETLALSENNLTTLPDNLVKLT), 156 to 177 (KLKVLDLRHNKIKEIPDVIYKL), 179 to 201 (TLTTLYLRFNRISVVESGIGNLK), 202 to 223 (LLERLSLRENKIKILPRVIGQL), 225 to 246 (HLVTLDISHNHIENLPAEIGNC), 248 to 269 (HMTSLDLQHNDIPSLPDSIGRL), 271 to 292 (AMTRLGLRYNQLSSLPDSLANC), 294 to 315 (GIDEFNIEGNNIAELPEKLLSS), 318 to 339 (NLTSLTLSRNKFEVFPAGPPKQ), 342 to 363 (QVNTFIMEHNRMQKIPFGVFNK), 366 to 387 (YLSKLNVKDNQLTSLPLDFGSW), 389 to 410 (SLVELNVATNQISKLPEDIQWL), 412 to 434 (NLEVLILSNNLLKKLPRGIGALR), 435 to 456 (KLRVLDIEENKLESIPTEIEYL), 458 to 479 (SLERLVLQSNCLGSLPRSIGYL), 481 to 502 (SVTYLSVGENELVSVPQEIGNM), 504 to 526 (SLEQLYLNDNENLQSLPYELVLC), and 528 to 549 (SLQIMSIENCPLSALPSQIVAG).

This sequence belongs to the SHOC2 family.

In terms of biological role, acts as a Ras effector and participates in MAPK pathway activation. Probably acts as a scaffolding protein in a protein phosphatase complex that specifically dephosphorylates Raf kinase and stimulate Raf activity at specialized signaling complexes upon Ras activation. This chain is Leucine-rich repeat protein soc-2 homolog, found in Nematostella vectensis (Starlet sea anemone).